Here is a 214-residue protein sequence, read N- to C-terminus: Small ribosomal subunit protein eS6 (214 aa).

It belongs to the eukaryotic ribosomal protein eS6 family.

This Saccharolobus solfataricus (strain ATCC 35092 / DSM 1617 / JCM 11322 / P2) (Sulfolobus solfataricus) protein is Small ribosomal subunit protein eS6.